The sequence spans 180 residues: Oligoribonuclease (180 aa).

The Exonuclease domain maps to 7 to 170; that stretch reads LIWIDLEMTG…DDIRDSINEL (164 aa). Residue Y128 is part of the active site.

Belongs to the oligoribonuclease family.

The protein localises to the cytoplasm. 3'-to-5' exoribonuclease specific for small oligoribonucleotides. This is Oligoribonuclease from Marinobacter nauticus (strain ATCC 700491 / DSM 11845 / VT8) (Marinobacter aquaeolei).